Reading from the N-terminus, the 155-residue chain is Cyclic pyranopterin monophosphate synthase (155 aa).

Substrate is bound by residues 75–77 and 111–112; these read LCH and ME. Aspartate 126 is an active-site residue.

This sequence belongs to the MoaC family. Homohexamer; trimer of dimers.

The enzyme catalyses (8S)-3',8-cyclo-7,8-dihydroguanosine 5'-triphosphate = cyclic pyranopterin phosphate + diphosphate. Its pathway is cofactor biosynthesis; molybdopterin biosynthesis. Catalyzes the conversion of (8S)-3',8-cyclo-7,8-dihydroguanosine 5'-triphosphate to cyclic pyranopterin monophosphate (cPMP). The sequence is that of Cyclic pyranopterin monophosphate synthase from Corynebacterium efficiens (strain DSM 44549 / YS-314 / AJ 12310 / JCM 11189 / NBRC 100395).